A 234-amino-acid chain; its full sequence is Ubiquinone biosynthesis O-methyltransferase (234 aa).

Residues R36, G56, D77, and M125 each coordinate S-adenosyl-L-methionine.

This sequence belongs to the methyltransferase superfamily. UbiG/COQ3 family.

The catalysed reaction is a 3-demethylubiquinol + S-adenosyl-L-methionine = a ubiquinol + S-adenosyl-L-homocysteine + H(+). It catalyses the reaction a 3-(all-trans-polyprenyl)benzene-1,2-diol + S-adenosyl-L-methionine = a 2-methoxy-6-(all-trans-polyprenyl)phenol + S-adenosyl-L-homocysteine + H(+). Its pathway is cofactor biosynthesis; ubiquinone biosynthesis. O-methyltransferase that catalyzes the 2 O-methylation steps in the ubiquinone biosynthetic pathway. The protein is Ubiquinone biosynthesis O-methyltransferase of Actinobacillus pleuropneumoniae serotype 5b (strain L20).